A 447-amino-acid polypeptide reads, in one-letter code: Glutamate-1-semialdehyde 2,1-aminomutase (447 aa).

Lys-272 carries the N6-(pyridoxal phosphate)lysine modification.

Belongs to the class-III pyridoxal-phosphate-dependent aminotransferase family. HemL subfamily. Homodimer. Requires pyridoxal 5'-phosphate as cofactor.

The protein localises to the cytoplasm. It catalyses the reaction (S)-4-amino-5-oxopentanoate = 5-aminolevulinate. The protein operates within porphyrin-containing compound metabolism; protoporphyrin-IX biosynthesis; 5-aminolevulinate from L-glutamyl-tRNA(Glu): step 2/2. This Leifsonia xyli subsp. xyli (strain CTCB07) protein is Glutamate-1-semialdehyde 2,1-aminomutase.